We begin with the raw amino-acid sequence, 371 residues long: Riboflavin biosynthesis protein RibD (371 aa).

The CMP/dCMP-type deaminase domain occupies 1–122 (MEEYYMNTAI…MLEEAGIEVK (122 aa)). The deaminase stretch occupies residues 1 to 144 (MEEYYMNTAI…KMFLHFMRTG (144 aa)). Residue H49 participates in Zn(2+) binding. The Proton donor role is filled by E51. C74 and C83 together coordinate Zn(2+). The segment at 145 to 371 (LPYVTLKAAA…KDGDDVYRNR (227 aa)) is reductase. A153 serves as a coordination point for NADP(+). S167 contributes to the substrate binding site. Residue W169 participates in NADP(+) binding. Position 183 (R183) interacts with substrate. 2 residues coordinate NADP(+): T195 and D199. The substrate site is built by L203 and R206. Residue T221 participates in NADP(+) binding. E290 is a substrate binding site. Residue 292 to 298 (GASVHGS) participates in NADP(+) binding.

This sequence in the N-terminal section; belongs to the cytidine and deoxycytidylate deaminase family. It in the C-terminal section; belongs to the HTP reductase family. Requires Zn(2+) as cofactor.

It carries out the reaction 2,5-diamino-6-hydroxy-4-(5-phosphoribosylamino)-pyrimidine + H2O + H(+) = 5-amino-6-(5-phospho-D-ribosylamino)uracil + NH4(+). The enzyme catalyses 5-amino-6-(5-phospho-D-ribitylamino)uracil + NADP(+) = 5-amino-6-(5-phospho-D-ribosylamino)uracil + NADPH + H(+). It functions in the pathway cofactor biosynthesis; riboflavin biosynthesis; 5-amino-6-(D-ribitylamino)uracil from GTP: step 2/4. The protein operates within cofactor biosynthesis; riboflavin biosynthesis; 5-amino-6-(D-ribitylamino)uracil from GTP: step 3/4. Its function is as follows. Converts 2,5-diamino-6-(ribosylamino)-4(3h)-pyrimidinone 5'-phosphate into 5-amino-6-(ribosylamino)-2,4(1h,3h)-pyrimidinedione 5'-phosphate. The polypeptide is Riboflavin biosynthesis protein RibD (ribD) (Bacillus amyloliquefaciens (Bacillus velezensis)).